Reading from the N-terminus, the 329-residue chain is Urease accessory protein UreD 2 (329 aa).

Positions 100–120 (YSRPSDSSKFTNGTQSANSNT) are disordered. The segment covering 103 to 120 (PSDSSKFTNGTQSANSNT) has biased composition (polar residues).

It belongs to the UreD family. In terms of assembly, ureD, UreF and UreG form a complex that acts as a GTP-hydrolysis-dependent molecular chaperone, activating the urease apoprotein by helping to assemble the nickel containing metallocenter of UreC. The UreE protein probably delivers the nickel.

Its subcellular location is the cytoplasm. Functionally, required for maturation of urease via the functional incorporation of the urease nickel metallocenter. In Psychrobacter cryohalolentis (strain ATCC BAA-1226 / DSM 17306 / VKM B-2378 / K5), this protein is Urease accessory protein UreD 2.